We begin with the raw amino-acid sequence, 260 residues long: Homeobox-leucine zipper protein HOX25 (260 aa).

The segment covering 1–10 has biased composition (acidic residues); that stretch reads MEDLVDELYG. Disordered regions lie at residues 1–24, 121–145, and 190–221; these read MEDL…ARKR, ANGK…PESA, and SPES…YPSS. The segment at residues 19–79 is a DNA-binding region (homeobox); sequence AAARKRRLTA…NRRARWKTKQ (61 aa). Residues 78-122 are leucine-zipper; it reads KQLELDFDRLRAAHDELLAGRAALAADNESLRSQVILLTEKLQAN. Positions 205–218 are enriched in acidic residues; that stretch reads SEDDCGGAGSDDDY.

It belongs to the HD-ZIP homeobox family. Class I subfamily. Expressed in roots, leaf sheaths and blades and panicles.

The protein localises to the nucleus. Functionally, probable transcription factor. In Oryza sativa subsp. indica (Rice), this protein is Homeobox-leucine zipper protein HOX25 (HOX25).